The sequence spans 666 residues: E3 ubiquitin-protein ligase MBR2 (666 aa).

4 stretches are compositionally biased toward polar residues: residues 1 to 14 (MQGPRSTGDSSTGI), 23 to 35 (CSTNSETTSNNIL), 42 to 58 (FPNNTTGSGRPTYASSS), and 73 to 88 (SSSRLGPSDHLNSNGS). Disordered stretches follow at residues 1–58 (MQGP…ASSS), 73–95 (SSSRLGPSDHLNSNGSKTDRQLL), 155–179 (SLGSSSQTAEERSSGPGSSLGGLGS), 221–329 (SSLS…DGQP), 400–433 (NPSTSGDSPFVPRAGSSSGIHGLQPNPTWVTPHN), and 457–491 (GASLPLLPTGPSVSSNEAAAPSGSSSRSHRSRQRR). The segment covering 221-239 (SSLSLSMPSQNSPNVNNQS) has biased composition (low complexity). 3 stretches are compositionally biased toward polar residues: residues 258 to 268 (AFPSTRSTETI), 286 to 303 (FSFTQSGSSVRQQQQLPA), and 414 to 433 (GSSSGIHGLQPNPTWVTPHN). The RING-type; atypical zinc-finger motif lies at 619–660 (CCVCQEEYAEGDDLGTLGCGHEFHTACVKQWLMLKNLCPICK).

The protein belongs to the RING-type zinc finger family. Interacts with MED25 and UBC11.

The enzyme catalyses S-ubiquitinyl-[E2 ubiquitin-conjugating enzyme]-L-cysteine + [acceptor protein]-L-lysine = [E2 ubiquitin-conjugating enzyme]-L-cysteine + N(6)-ubiquitinyl-[acceptor protein]-L-lysine.. It participates in protein modification; protein ubiquitination. Functionally, E3 ubiquitin-protein ligase that functions as a regulator of MED25 stability by targeting MED25 for degradation in a RING-H2-dependent way. Proteasome-dependent degradation of MED25 seems to activate its function as positive regulator of FLOWERING LOCUS T (FT) and is important to induce the expression of FT and consequently to promote flowering. May function downstream of HAL3 and be required for HAL3-regulated plant growth. Activation of MBR2 by HAL3 may lead to the degradation of cell cycle suppressors, resulting in enhancement of cell division and plant growth. In Arabidopsis thaliana (Mouse-ear cress), this protein is E3 ubiquitin-protein ligase MBR2 (MBR2).